A 660-amino-acid polypeptide reads, in one-letter code: GRIP and coiled-coil domain-containing protein 2 (660 aa).

The interval 1-28 is disordered; the sequence is MSAPESSISPVPPPGSSSGGGKKLDSLP. Coiled coils occupy residues 30–92, 115–464, and 517–596; these read EDLV…VENN, EWKE…KAIA, and DEYR…EYLK. The region spanning 585–636 is the GRIP domain; it reads ELSNEKNMEYLKNVFVQFLKPESVPAERDQLVIVLQRVLHLSPKEVEILKAA.

The polypeptide is GRIP and coiled-coil domain-containing protein 2 (Caenorhabditis elegans).